A 1066-amino-acid chain; its full sequence is Isoleucine--tRNA ligase (1066 aa).

Positions 47–57 (PYTTGYIHLGT) match the 'HIGH' region motif. The 'KMSKS' region motif lies at 594 to 598 (KMSKS). Lysine 597 contacts ATP.

It belongs to the class-I aminoacyl-tRNA synthetase family. IleS type 2 subfamily. In terms of assembly, monomer. The cofactor is Zn(2+).

The protein resides in the cytoplasm. It catalyses the reaction tRNA(Ile) + L-isoleucine + ATP = L-isoleucyl-tRNA(Ile) + AMP + diphosphate. Functionally, catalyzes the attachment of isoleucine to tRNA(Ile). As IleRS can inadvertently accommodate and process structurally similar amino acids such as valine, to avoid such errors it has two additional distinct tRNA(Ile)-dependent editing activities. One activity is designated as 'pretransfer' editing and involves the hydrolysis of activated Val-AMP. The other activity is designated 'posttransfer' editing and involves deacylation of mischarged Val-tRNA(Ile). This is Isoleucine--tRNA ligase from Methanocorpusculum labreanum (strain ATCC 43576 / DSM 4855 / Z).